A 113-amino-acid chain; its full sequence is Beta-microseminoprotein (113 aa).

The signal sequence occupies residues 1-20 (MKARLGSLLVLATLVTASNA). Intrachain disulfides connect Cys-22-Cys-69, Cys-38-Cys-61, Cys-56-Cys-92, Cys-59-Cys-68, and Cys-83-Cys-106.

The protein belongs to the beta-microseminoprotein family. As to quaternary structure, homodimer; Interacts with PI16.

The protein localises to the secreted. The polypeptide is Beta-microseminoprotein (Msmb) (Rattus norvegicus (Rat)).